A 403-amino-acid chain; its full sequence is 26S proteasome regulatory subunit 8 (403 aa).

186–193 (GPPGTGKT) lines the ATP pocket.

It belongs to the AAA ATPase family.

Its subcellular location is the cytoplasm. It localises to the nucleus. Functionally, the 26S proteasome is involved in the ATP-dependent degradation of ubiquitinated proteins. The regulatory (or ATPase) complex confers ATP dependency and substrate specificity to the 26S complex. The protein is 26S proteasome regulatory subunit 8 (psmC5) of Dictyostelium discoideum (Social amoeba).